The primary structure comprises 282 residues: Energy-coupling factor transporter ATP-binding protein EcfA1 (282 aa).

Residues 6–243 (ISFDHVTFTY…VEMLKRIGLD (238 aa)) form the ABC transporter domain. 40–47 (GHNGSGKS) serves as a coordination point for ATP.

Belongs to the ABC transporter superfamily. Energy-coupling factor EcfA family. As to quaternary structure, forms a stable energy-coupling factor (ECF) transporter complex composed of 2 membrane-embedded substrate-binding proteins (S component), 2 ATP-binding proteins (A component) and 2 transmembrane proteins (T component).

It localises to the cell membrane. Functionally, ATP-binding (A) component of a common energy-coupling factor (ECF) ABC-transporter complex. Unlike classic ABC transporters this ECF transporter provides the energy necessary to transport a number of different substrates. This Lactobacillus delbrueckii subsp. bulgaricus (strain ATCC BAA-365 / Lb-18) protein is Energy-coupling factor transporter ATP-binding protein EcfA1.